We begin with the raw amino-acid sequence, 242 residues long: Myogenic factor 6 (242 aa).

The tract at residues 31-63 is disordered; sequence SPLYPGSDGTLSPCQDQMPPEAGSDSSGEEHVL. A bHLH domain is found at 93 to 144; it reads DRRKAATLRERRRLKKINEAFEALKRRTVANPNQRLPKVEILRSAINYIERL.

In terms of assembly, efficient DNA binding requires dimerization with another bHLH protein. Interacts with CSRP3.

It localises to the nucleus. Involved in muscle differentiation (myogenic factor). Induces fibroblasts to differentiate into myoblasts. Probable sequence specific DNA-binding protein. This is Myogenic factor 6 (MYF6) from Bos taurus (Bovine).